Consider the following 219-residue polypeptide: MRDSRQPVIRSSPSAVMGKYRNGQFMCHGMAQTYRAYREEMRTFLTGPYLSLMNAFTHHSDARVEEICKNEYIPPFEDLLKQYCTLRLDGGRQSGKSIAVTNFAANWLYDGGTVIVLSNTSAYAKISANNIKKEFSRYSNDDIRFRLFTDSVRSFIGNKGSKFRGLKLSRILYIIDEPVKSPDMDKIYSVHIDTVHYCCNSKCCIGGITRPQFFVIGMQ.

This is an uncharacterized protein from Escherichia coli (Bacteriophage T4).